The chain runs to 78 residues: Putative membrane protein insertion efficiency factor (78 aa).

The protein belongs to the UPF0161 family.

The protein resides in the cell inner membrane. Could be involved in insertion of integral membrane proteins into the membrane. The polypeptide is Putative membrane protein insertion efficiency factor (Roseobacter denitrificans (strain ATCC 33942 / OCh 114) (Erythrobacter sp. (strain OCh 114))).